A 283-amino-acid chain; its full sequence is 4-diphosphocytidyl-2-C-methyl-D-erythritol kinase (283 aa).

Residue K10 is part of the active site. 94-104 (PVAAGLAGGSS) contacts ATP. D136 is a catalytic residue.

Belongs to the GHMP kinase family. IspE subfamily.

It carries out the reaction 4-CDP-2-C-methyl-D-erythritol + ATP = 4-CDP-2-C-methyl-D-erythritol 2-phosphate + ADP + H(+). The protein operates within isoprenoid biosynthesis; isopentenyl diphosphate biosynthesis via DXP pathway; isopentenyl diphosphate from 1-deoxy-D-xylulose 5-phosphate: step 3/6. Catalyzes the phosphorylation of the position 2 hydroxy group of 4-diphosphocytidyl-2C-methyl-D-erythritol. The sequence is that of 4-diphosphocytidyl-2-C-methyl-D-erythritol kinase from Enterococcus faecalis (strain ATCC 700802 / V583).